Reading from the N-terminus, the 236-residue chain is uncharacterized protein (236 aa).

Residues 186 to 236 form a disordered region; that stretch reads HGRGDTRNLNDITGLGHERERDRENTHYEKKPKLDSDSEVDIRSFRQDMDL. The segment covering 201–236 has biased composition (basic and acidic residues); that stretch reads GHERERDRENTHYEKKPKLDSDSEVDIRSFRQDMDL. Position 221 is a phosphoserine (S221).

This is an uncharacterized protein from Saccharomyces cerevisiae (strain ATCC 204508 / S288c) (Baker's yeast).